A 362-amino-acid chain; its full sequence is Protein-glutamate methylesterase/protein-glutamine glutaminase (362 aa).

The Response regulatory domain maps to 5–122 (KVLCVDDSAL…RDGMLDYSEK (118 aa)). Aspartate 56 carries the post-translational modification 4-aspartylphosphate. Residues 163–355 (LLSTEKLIIV…RRVMARLSSM (193 aa)) form the CheB-type methylesterase domain. Catalysis depends on residues serine 175, histidine 201, and aspartate 297.

This sequence belongs to the CheB family. Phosphorylated by CheA. Phosphorylation of the N-terminal regulatory domain activates the methylesterase activity.

It localises to the cytoplasm. It catalyses the reaction [protein]-L-glutamate 5-O-methyl ester + H2O = L-glutamyl-[protein] + methanol + H(+). It carries out the reaction L-glutaminyl-[protein] + H2O = L-glutamyl-[protein] + NH4(+). Involved in chemotaxis. Part of a chemotaxis signal transduction system that modulates chemotaxis in response to various stimuli. Catalyzes the demethylation of specific methylglutamate residues introduced into the chemoreceptors (methyl-accepting chemotaxis proteins or MCP) by CheR. Also mediates the irreversible deamidation of specific glutamine residues to glutamic acid. This Paraburkholderia xenovorans (strain LB400) protein is Protein-glutamate methylesterase/protein-glutamine glutaminase.